The chain runs to 484 residues: 60S ribosome subunit biogenesis protein NOP8 (484 aa).

The RRM domain maps to 7 to 83 (KRIFVGNIFH…NILKVDEAKP (77 aa)). A phosphoserine mark is found at S234, S239, and S268. A disordered region spans residues 260 to 330 (DKPMTLNDSD…EGDGQEDNEF (71 aa)). Over residues 320 to 329 (DEGDGQEDNE) the composition is skewed to acidic residues. Position 370 is a phosphoserine (S370).

In terms of assembly, interacts with NIP7 and RRP43. Together with DBP6, URB1, URB2 and RSA3, forms an RNA-independent complex, which is required during early maturation of nascent 60S ribosomal subunits.

The protein resides in the nucleus. It is found in the nucleolus. Functionally, required for 60S ribosomal subunit synthesis. May be involved in assembly reactions occurring within late pre-ribosomal particles. The protein is 60S ribosome subunit biogenesis protein NOP8 (NOP8) of Saccharomyces cerevisiae (strain ATCC 204508 / S288c) (Baker's yeast).